Consider the following 329-residue polypeptide: Mo25-like protein (329 aa).

Belongs to the Mo25 family.

The protein is Mo25-like protein (pmo25) of Schizosaccharomyces pombe (strain 972 / ATCC 24843) (Fission yeast).